Here is an 851-residue protein sequence, read N- to C-terminus: Venom phosphodiesterase (851 aa).

The N-terminal stretch at 1–23 (MIQQKVLFISLVAVALGLGLGLG) is a signal peptide. 2 SMB domains span residues 30-73 (PQVS…VLPT) and 74-118 (QSWS…GETS). 16 disulfides stabilise this stretch: C34–C38, C34–C51, C38–C69, C49–C51, C49–C62, C55–C61, C62–C69, C78–C83, C78–C95, C83–C113, C93–C95, C93–C106, C99–C105, C106–C113, C124–C170, and C132–C344. An N-linked (GlcNAc...) asparagine glycan is attached at N39. The Cell attachment site motif lies at 58 to 60 (RQA). Residues D147 and T185 each contribute to the a divalent metal cation site. Residue T185 is the AMP-threonine intermediate of the active site. N216, N259, and N270 each carry an N-linked (GlcNAc...) asparagine glycan. K271 contacts AMP. A divalent metal cation is bound by residues D305, H309, D352, and H353. Residue H309 participates in AMP binding. Disulfide bonds link C360/C457, C408/C793, C541/C599, C554/C654, C556/C639, and C762/C772. N405 carries N-linked (GlcNAc...) asparagine glycosylation. A divalent metal cation is bound at residue H462. N-linked (GlcNAc...) asparagine glycans are attached at residues N512, N594, and N745.

It belongs to the nucleotide pyrophosphatase/phosphodiesterase family. As to quaternary structure, monomer cleaved in two subunits; disulfide-linked. Is synthesized as a single-chain protein and is subsequently cleaved to form a two-subunit protein held together with disulfide bonds. It depends on a divalent metal cation as a cofactor. Expressed by venom gland.

The protein resides in the secreted. It carries out the reaction ADP + H2O = AMP + phosphate + H(+). Hydrolyzes ADP with high activity. Shows weak or no activity on 5'-AMP, 5'-GMP, 3'-AMP, ATP, cAMP, and cGMP. Is devoid of monophosphatase and proteinase activities. Dose-dependently inhibits platelet aggregation induced by ADP (IC(50)=0.99 uM) and collagen (IC(50)=1.4 uM). The chain is Venom phosphodiesterase from Macrovipera lebetinus (Levantine viper).